A 320-amino-acid chain; its full sequence is Beta-ketoacyl-[acyl-carrier-protein] synthase III (320 aa).

Catalysis depends on residues Cys113 and His247. Residues 248 to 252 are ACP-binding; that stretch reads QANRR. Asn277 is a catalytic residue.

It belongs to the thiolase-like superfamily. FabH family. As to quaternary structure, homodimer.

The protein localises to the cytoplasm. It catalyses the reaction malonyl-[ACP] + acetyl-CoA + H(+) = 3-oxobutanoyl-[ACP] + CO2 + CoA. The protein operates within lipid metabolism; fatty acid biosynthesis. Functionally, catalyzes the condensation reaction of fatty acid synthesis by the addition to an acyl acceptor of two carbons from malonyl-ACP. Catalyzes the first condensation reaction which initiates fatty acid synthesis and may therefore play a role in governing the total rate of fatty acid production. Possesses both acetoacetyl-ACP synthase and acetyl transacylase activities. Its substrate specificity determines the biosynthesis of branched-chain and/or straight-chain of fatty acids. This is Beta-ketoacyl-[acyl-carrier-protein] synthase III from Acidiphilium cryptum (strain JF-5).